The chain runs to 398 residues: tRNA(Ile)-lysidine synthase (398 aa).

25–30 (SGGVDS) contributes to the ATP binding site.

It belongs to the tRNA(Ile)-lysidine synthase family.

Its subcellular location is the cytoplasm. It carries out the reaction cytidine(34) in tRNA(Ile2) + L-lysine + ATP = lysidine(34) in tRNA(Ile2) + AMP + diphosphate + H(+). Ligates lysine onto the cytidine present at position 34 of the AUA codon-specific tRNA(Ile) that contains the anticodon CAU, in an ATP-dependent manner. Cytidine is converted to lysidine, thus changing the amino acid specificity of the tRNA from methionine to isoleucine. The chain is tRNA(Ile)-lysidine synthase from Francisella tularensis subsp. tularensis (strain SCHU S4 / Schu 4).